Reading from the N-terminus, the 459-residue chain is ATP-dependent protease ATPase subunit HslU (459 aa).

Residues valine 18, 60-65, aspartate 272, glutamate 337, and arginine 409 contribute to the ATP site; that span reads GVGKTE.

The protein belongs to the ClpX chaperone family. HslU subfamily. As to quaternary structure, a double ring-shaped homohexamer of HslV is capped on each side by a ring-shaped HslU homohexamer. The assembly of the HslU/HslV complex is dependent on binding of ATP.

The protein localises to the cytoplasm. ATPase subunit of a proteasome-like degradation complex; this subunit has chaperone activity. The binding of ATP and its subsequent hydrolysis by HslU are essential for unfolding of protein substrates subsequently hydrolyzed by HslV. HslU recognizes the N-terminal part of its protein substrates and unfolds these before they are guided to HslV for hydrolysis. This chain is ATP-dependent protease ATPase subunit HslU, found in Thermoanaerobacter pseudethanolicus (strain ATCC 33223 / 39E) (Clostridium thermohydrosulfuricum).